The chain runs to 487 residues: DNA-dependent metalloprotease SPRTN (487 aa).

An N-acetylmethionine modification is found at Met1. A SprT-like domain is found at 45–212 (LQGLFVLFND…KTCGGTYIKI (168 aa)). His111 serves as a coordination point for Zn(2+). Residue Glu112 is part of the active site. Zn(2+) is bound by residues His115 and His130. The tract at residues 219–248 (SKKGKGKTKLRKQPVSEAENKDKPNRGEKQ) is disordered. Basic residues predominate over residues 220 to 230 (KKGKGKTKLRK). Lys230 carries the N6-acetyllysine modification. Residues 236-247 (AENKDKPNRGEK) show a composition bias toward basic and acidic residues. The short motif at 253–261 (FTGKGYVLG) is the SHP-box element. Phosphoserine is present on Ser267. A compositionally biased stretch (polar residues) spans 280–289 (SQEPLSQDHS). The tract at residues 280-317 (SQEPLSQDHSANALRPHSKTEVKFEQNGPSKKTSVASP) is disordered. Residue Lys302 forms a Glycyl lysine isopeptide (Lys-Gly) (interchain with G-Cter in SUMO2) linkage. Positions 306 to 317 (NGPSKKTSVASP) are enriched in polar residues. Residues 324-331 (QNVLSNYF) carry the PIP-box motif. A Glycyl lysine isopeptide (Lys-Gly) (interchain with G-Cter in SUMO2); alternate cross-link involves residue Lys340. Lys340 is covalently cross-linked (Glycyl lysine isopeptide (Lys-Gly) (interchain with G-Cter in ubiquitin); alternate). Positions 347 to 379 (GSPVKSLTVGDSTTKSVSAGSQRRVTSSRTSLR) are disordered. Ser373 bears the Phosphoserine mark. Positions 401-412 (GKLPSKRPRIED) match the Nuclear localization signal motif. Residue Lys413 forms a Glycyl lysine isopeptide (Lys-Gly) (interchain with G-Cter in ubiquitin) linkage. Glycyl lysine isopeptide (Lys-Gly) (interchain with G-Cter in SUMO2) cross-links involve residues Lys422 and Lys423. The disordered stretch occupies residues 427 to 455 (QSGGGDVTSSSHPPAAAQSPSGASGQSRV). Residues 435–453 (SSSHPPAAAQSPSGASGQS) show a composition bias toward low complexity. A UBZ4-type zinc finger spans residues 455 to 482 (VVHCPVCQDEVSETQINEHLDWCLERDS). 4 residues coordinate Zn(2+): Cys458, Cys461, His473, and Cys477. A Glycyl lysine isopeptide (Lys-Gly) (interchain with G-Cter in SUMO2) cross-link involves residue Lys486.

This sequence belongs to the Spartan family. In terms of assembly, homodimer. Interacts (VIA PIP-box) with PCNA (when ubiquitinated). Interacts (via its SHP-box) with VCP/p97. Interacts with RAD18. Interacts with KCTD13 and POLD3. It depends on Zn(2+) as a cofactor. Autocatalytically cleaved in response to double-stranded DNA-binding: autocatalytic cleavage takes place in trans and leads to inactivation. Post-translationally, monoubiquitinated; monoubiquitination promotes exclusion from chromatin. Deubiquitinated by VCPIP1: deubiquitination is required for subsequent acetylation and recruitment to chromatin and DNA damage sites. In terms of processing, acetylated following deubiquitination by VCPIP1, leading to recruitment to chromatin and DNA damage sites. Phosphorylation by CHEK1 promotes recruitment to chromatin.

The protein localises to the nucleus. It localises to the chromosome. With respect to regulation, DNA-binding activates the protease activity: single-stranded DNA-binding specifically activates ability to cleave covalent DNA-protein cross-links (DPCs). In contrast, double-stranded DNA-binding specifically activates autocatalytic cleavage, and subsequent inactivation. Functionally, DNA-dependent metalloendopeptidase that mediates the proteolytic cleavage of covalent DNA-protein cross-links (DPCs) during DNA synthesis, thereby playing a key role in maintaining genomic integrity. DPCs are highly toxic DNA lesions that interfere with essential chromatin transactions, such as replication and transcription, and which are induced by reactive agents, such as UV light or formaldehyde. Associates with the DNA replication machinery and specifically removes DPCs during DNA synthesis. Catalyzes proteolytic cleavage of the HMCES DNA-protein cross-link following unfolding by the BRIP1/FANCJ helicase. Acts as a pleiotropic protease for DNA-binding proteins cross-linked with DNA, such as TOP1, TOP2A, histones H3 and H4. Mediates degradation of DPCs that are not ubiquitinated, while it is not able to degrade ubiquitinated DPCs. SPRTN activation requires polymerase collision with DPCs followed by helicase bypass of DPCs. Involved in recruitment of VCP/p97 to sites of DNA damage. Also acts as an activator of CHEK1 during normal DNA replication by mediating proteolytic cleavage of CHEK1, thereby promoting CHEK1 removal from chromatin and subsequent activation. Does not activate CHEK1 in response to DNA damage. May also act as a 'reader' of ubiquitinated PCNA: recruited to sites of UV damage and interacts with ubiquitinated PCNA and RAD18, the E3 ubiquitin ligase that monoubiquitinates PCNA. Facilitates chromatin association of RAD18 and is required for efficient PCNA monoubiquitination, promoting a feed-forward loop to enhance PCNA ubiquitination and translesion DNA synthesis. The chain is DNA-dependent metalloprotease SPRTN from Bos taurus (Bovine).